The primary structure comprises 212 residues: ATP-dependent Clp protease proteolytic subunit (212 aa).

Residue serine 106 is the Nucleophile of the active site. Histidine 131 is a catalytic residue.

Belongs to the peptidase S14 family. In terms of assembly, fourteen ClpP subunits assemble into 2 heptameric rings which stack back to back to give a disk-like structure with a central cavity, resembling the structure of eukaryotic proteasomes.

The protein localises to the cytoplasm. It carries out the reaction Hydrolysis of proteins to small peptides in the presence of ATP and magnesium. alpha-casein is the usual test substrate. In the absence of ATP, only oligopeptides shorter than five residues are hydrolyzed (such as succinyl-Leu-Tyr-|-NHMec, and Leu-Tyr-Leu-|-Tyr-Trp, in which cleavage of the -Tyr-|-Leu- and -Tyr-|-Trp bonds also occurs).. Functionally, cleaves peptides in various proteins in a process that requires ATP hydrolysis. Has a chymotrypsin-like activity. Plays a major role in the degradation of misfolded proteins. The protein is ATP-dependent Clp protease proteolytic subunit of Rhodopseudomonas palustris (strain HaA2).